Here is a 319-residue protein sequence, read N- to C-terminus: ATP-dependent 6-phosphofructokinase (319 aa).

ATP is bound at residue G11. 21-25 (RAVVR) lines the ADP pocket. ATP-binding positions include 72–73 (RC) and 102–105 (GDGS). D103 serves as a coordination point for Mg(2+). 125–127 (TID) lines the substrate pocket. Residue D127 is the Proton acceptor of the active site. R154 serves as a coordination point for ADP. Residues R162 and 169–171 (MGR) each bind substrate. ADP contacts are provided by residues 185–187 (GAE), R211, and 213–215 (KKH). Substrate is bound by residues E222, R243, and 249–252 (HIQR).

This sequence belongs to the phosphofructokinase type A (PFKA) family. ATP-dependent PFK group I subfamily. Prokaryotic clade 'B1' sub-subfamily. In terms of assembly, homotetramer. Component of a possible RNA degradosome complex composed of rny, rnjA, rnjB, pnp, pfkA and eno (although rnjA and rnjB's presence is unclear). Specifically interacts with RNase Y (rny, PubMed:21803996) and enolase (eno, PubMed:22198292). Interacts with BrxC. The cofactor is Mg(2+).

Its subcellular location is the cytoplasm. The enzyme catalyses beta-D-fructose 6-phosphate + ATP = beta-D-fructose 1,6-bisphosphate + ADP + H(+). The protein operates within carbohydrate degradation; glycolysis; D-glyceraldehyde 3-phosphate and glycerone phosphate from D-glucose: step 3/4. Its activity is regulated as follows. Allosterically activated by ADP and other diphosphonucleosides, and allosterically inhibited by phosphoenolpyruvate. Catalyzes the phosphorylation of D-fructose 6-phosphate to fructose 1,6-bisphosphate by ATP, the first committing step of glycolysis. This chain is ATP-dependent 6-phosphofructokinase, found in Bacillus subtilis (strain 168).